The sequence spans 365 residues: Cobalt-precorrin-5B C(1)-methyltransferase (365 aa).

This sequence belongs to the CbiD family.

The catalysed reaction is Co-precorrin-5B + S-adenosyl-L-methionine = Co-precorrin-6A + S-adenosyl-L-homocysteine. It participates in cofactor biosynthesis; adenosylcobalamin biosynthesis; cob(II)yrinate a,c-diamide from sirohydrochlorin (anaerobic route): step 6/10. Catalyzes the methylation of C-1 in cobalt-precorrin-5B to form cobalt-precorrin-6A. The polypeptide is Cobalt-precorrin-5B C(1)-methyltransferase (Methanococcus maripaludis (strain C5 / ATCC BAA-1333)).